Here is a 232-residue protein sequence, read N- to C-terminus: Demethylmenaquinone methyltransferase (232 aa).

S-adenosyl-L-methionine is bound by residues Thr-58, Asp-79, and 104–105; that span reads NA.

The protein belongs to the class I-like SAM-binding methyltransferase superfamily. MenG/UbiE family.

It carries out the reaction a 2-demethylmenaquinol + S-adenosyl-L-methionine = a menaquinol + S-adenosyl-L-homocysteine + H(+). It functions in the pathway quinol/quinone metabolism; menaquinone biosynthesis; menaquinol from 1,4-dihydroxy-2-naphthoate: step 2/2. Its function is as follows. Methyltransferase required for the conversion of demethylmenaquinol (DMKH2) to menaquinol (MKH2). This is Demethylmenaquinone methyltransferase from Bacillus licheniformis (strain ATCC 14580 / DSM 13 / JCM 2505 / CCUG 7422 / NBRC 12200 / NCIMB 9375 / NCTC 10341 / NRRL NRS-1264 / Gibson 46).